A 179-amino-acid polypeptide reads, in one-letter code: Gamma-glutamyl cyclotransferase verK (179 aa).

It belongs to the class-I pyridoxal-phosphate-dependent aminotransferase family.

The enzyme catalyses an alpha-(gamma-L-glutamyl)-L-amino acid = 5-oxo-L-proline + an L-alpha-amino acid. The protein operates within mycotoxin biosynthesis. Gamma-glutamyl cyclotransferase; part of the gene cluster that mediates the biosynthesis of 11'-deoxyverticillin A, one of the dimeric epipolythiodioxopiperazines (ETPs) from the verticillin family that act as mycotoxins. 11'-deoxyverticillin A is required for normal conidiation. The nonribosomal peptide synthetase verP is speculated to be responsible for condensation of amino acids to form the carbon skeleton of verticillin, whereas the cluster-specific tailoring enzymes are involved in further modifications leading to the production of 11'-deoxyverticillin A. In Clonostachys rogersoniana, this protein is Gamma-glutamyl cyclotransferase verK.